A 942-amino-acid polypeptide reads, in one-letter code: Chitin synthase 2 (942 aa).

Basic and acidic residues predominate over residues 1 to 13 (MAYHYSHDSDRRQ). A disordered region spans residues 1–132 (MAYHYSHDSD…PSHTDYSDED (132 aa)). Low complexity predominate over residues 18–33 (YNYPSNYSNPSQYSIP). N-linked (GlcNAc...) asparagine glycosylation is present at asparagine 23. Positions 71–80 (PQPTASSMTS) are enriched in polar residues. Residue asparagine 587 is glycosylated (N-linked (GlcNAc...) asparagine). 4 helical membrane-spanning segments follow: residues 590–610 (IFAATYAMVCFWRIWTSGHGI), 625–645 (FNLLFNWLSVSSFYLAFFFLI), 663–683 (IFQVFNKVYIALIFVVLVCSL), and 696–716 (FCIFMFAVCQGILLYCAGWTV). A glycan (N-linked (GlcNAc...) asparagine) is linked at asparagine 736. A run of 2 helical transmembrane segments spans residues 739-759 (FVQLALSLMATYGLYLISSLL) and 770-790 (FVQYLLLLPSYVNILLIYAMC). Asparagine 803 carries an N-linked (GlcNAc...) asparagine glycan. A run of 2 helical transmembrane segments spans residues 873-893 (VVLLFLGSNMLIILLFTSSTF) and 916-936 (IFYAVLGLSALRFAGCLLYLI).

It belongs to the chitin synthase family. Class III subfamily.

Its subcellular location is the cell membrane. It carries out the reaction [(1-&gt;4)-N-acetyl-beta-D-glucosaminyl](n) + UDP-N-acetyl-alpha-D-glucosamine = [(1-&gt;4)-N-acetyl-beta-D-glucosaminyl](n+1) + UDP + H(+). Functionally, polymerizes chitin, a structural polymer of the cell wall and septum, by transferring the sugar moiety of UDP-GlcNAc to the non-reducing end of the growing chitin polymer. This chain is Chitin synthase 2, found in Cryptococcus neoformans var. grubii serotype A (strain H99 / ATCC 208821 / CBS 10515 / FGSC 9487) (Filobasidiella neoformans var. grubii).